The following is a 202-amino-acid chain: Inosine triphosphate pyrophosphatase (202 aa).

Residue 8–13 (TGNANK) participates in ITP binding. A Mg(2+)-binding site is contributed by E55. Residues K67, 83–84 (DT), K100, 159–162 (FGWD), K182, and 187–188 (HR) contribute to the ITP site.

Belongs to the HAM1 NTPase family. As to quaternary structure, homodimer. Mg(2+) is required as a cofactor. It depends on Mn(2+) as a cofactor.

The protein resides in the cytoplasm. Its subcellular location is the nucleus. The catalysed reaction is ITP + H2O = IMP + diphosphate + H(+). It carries out the reaction dITP + H2O = dIMP + diphosphate + H(+). The enzyme catalyses XTP + H2O = XMP + diphosphate + H(+). Pyrophosphatase that hydrolyzes non-canonical purine nucleotides such as inosine triphosphate (ITP), deoxyinosine triphosphate (dITP) or xanthosine 5'-triphosphate (XTP) to their respective monophosphate derivatives. The enzyme does not distinguish between the deoxy- and ribose forms. Probably excludes non-canonical purines from RNA and DNA precursor pools, thus preventing their incorporation into RNA and DNA and avoiding chromosomal lesions. The protein is Inosine triphosphate pyrophosphatase of Candida albicans (strain SC5314 / ATCC MYA-2876) (Yeast).